The chain runs to 335 residues: MVKAKIAVNGYGTIGKRVADAVQAQDDMEIIGVSKTKPNYEAAVAHQKGYDLFAPASNSGAFEKAGIPLAGTIEEMVEKADLVVDCTPGGIGEANKPMYEKAGVKAIWQGGEDHELAGFSFNAASNYEGALGRDLVRVVSCNTTGLCRVIYPIDRELGVKKVRVTLARRATDPNDIKKGPINAIVPDPIKLPSHHGPDIKSVLPHINITTAALKIPTTLMHLHTVNMEVNTDCTAEDINRIFSSQSRIRFMSQGINSTAEIIELARDMGRPRNDMWENCIWPESITVHEREFYFFQAIHQESIVVPETVDAIRAMMELESDGAKSIQKTNKAIGL.

NAD(+) is bound by residues 13 to 14 and Gly-111; that span reads TI. D-glyceraldehyde 3-phosphate is bound at residue 140-142; sequence SCN. The Nucleophile role is filled by Cys-141. Arg-169 lines the NAD(+) pocket. D-glyceraldehyde 3-phosphate contacts are provided by residues Thr-171 and 195–196; that span reads HG. Gln-300 contacts NAD(+).

The protein belongs to the glyceraldehyde-3-phosphate dehydrogenase family. Homotetramer.

It is found in the cytoplasm. The catalysed reaction is D-glyceraldehyde 3-phosphate + phosphate + NADP(+) = (2R)-3-phospho-glyceroyl phosphate + NADPH + H(+). It catalyses the reaction D-glyceraldehyde 3-phosphate + phosphate + NAD(+) = (2R)-3-phospho-glyceroyl phosphate + NADH + H(+). Its pathway is carbohydrate degradation; glycolysis; pyruvate from D-glyceraldehyde 3-phosphate: step 1/5. The protein is Glyceraldehyde-3-phosphate dehydrogenase of Methanosarcina mazei (strain ATCC BAA-159 / DSM 3647 / Goe1 / Go1 / JCM 11833 / OCM 88) (Methanosarcina frisia).